The primary structure comprises 1959 residues: Myosin-9 (1959 aa).

The 51-residue stretch at 27–77 (AAKKLVWVPSEKSGFEAASLKEEVGDEAIVELAENGKKVKVNKDDIQKMNP) folds into the Myosin N-terminal SH3-like domain. Residues 81 to 776 (SKVEDMAELT…VLAHLEEERD (696 aa)) enclose the Myosin motor domain. 174-181 (GESGAGKT) provides a ligand contact to ATP. Residues 654–676 (LAKLMATLRNTNPNFVRCIIPNH) form an actin-binding region. An IQ domain is found at 779-808 (ITDVIIGFQACCRGYLARKAFAKRQQQLTA). A coiled-coil region spans residues 837 to 1925 (LLQVSRQEEE…LKSKLRRGDL (1089 aa)). Disordered stretches follow at residues 1118-1168 (EDLE…REQE), 1694-1717 (RAKR…SGKG), 1879-1917 (LEEA…SSLK), and 1936-1959 (KGTG…KATE). Composition is skewed to basic and acidic residues over residues 1122 to 1148 (SERA…KTEL) and 1694 to 1704 (RAKRQAQQERD). Basic and acidic residues predominate over residues 1947–1959 (DGKAEAGDAKATE).

The protein belongs to the TRAFAC class myosin-kinesin ATPase superfamily. Myosin family. In terms of assembly, myosin is a hexameric protein that consists of 2 heavy chain subunits (MHC), 2 alkali light chain subunits (MLC) and 2 regulatory light chain subunits (MLC-2). In terms of tissue distribution, expressed in fibroblasts, brain, lung, kidney, spleen, and skeletal, cardiac and smooth muscles.

Its subcellular location is the cytoplasm. It is found in the cytoskeleton. The protein resides in the cell cortex. The protein localises to the cytoplasmic vesicle. It localises to the secretory vesicle. Its subcellular location is the cortical granule. Functionally, cellular myosin that appears to play a role in cytokinesis, cell shape, and specialized functions such as secretion and capping. This is Myosin-9 (MYH9) from Gallus gallus (Chicken).